A 93-amino-acid polypeptide reads, in one-letter code: MAVENIVWPRYLDASITRSDGRRVSLQDAIEDPEVDEIAEAVQQIGYDAVIEHDVAHPREWGTSGRVIVKGADDSSKNDLVQAVAAYIHLLRE.

The protein belongs to the SRP19 family. As to quaternary structure, part of the signal recognition particle protein translocation system, which is composed of SRP and FtsY. Archaeal SRP consists of a 7S RNA molecule of 300 nucleotides and two protein subunits: SRP54 and SRP19.

It is found in the cytoplasm. Involved in targeting and insertion of nascent membrane proteins into the cytoplasmic membrane. Binds directly to 7S RNA and mediates binding of the 54 kDa subunit of the SRP. In Haloquadratum walsbyi (strain DSM 16790 / HBSQ001), this protein is Signal recognition particle 19 kDa protein.